Here is a 383-residue protein sequence, read N- to C-terminus: 8-amino-7-oxononanoate synthase (383 aa).

Residue R21 coordinates substrate. 108–109 is a binding site for pyridoxal 5'-phosphate; sequence GF. Substrate is bound at residue H133. Residues S179, H207, and T233 each coordinate pyridoxal 5'-phosphate. An N6-(pyridoxal phosphate)lysine modification is found at K236. Residue T350 coordinates substrate.

This sequence belongs to the class-II pyridoxal-phosphate-dependent aminotransferase family. BioF subfamily. As to quaternary structure, homodimer. The cofactor is pyridoxal 5'-phosphate.

The enzyme catalyses 6-carboxyhexanoyl-[ACP] + L-alanine + H(+) = (8S)-8-amino-7-oxononanoate + holo-[ACP] + CO2. It functions in the pathway cofactor biosynthesis; biotin biosynthesis. Its function is as follows. Catalyzes the decarboxylative condensation of pimeloyl-[acyl-carrier protein] and L-alanine to produce 8-amino-7-oxononanoate (AON), [acyl-carrier protein], and carbon dioxide. The protein is 8-amino-7-oxononanoate synthase of Cronobacter sakazakii (strain ATCC BAA-894) (Enterobacter sakazakii).